The chain runs to 387 residues: Alpha-2B adrenergic receptor (387 aa).

The chain crosses the membrane as a helical span at residues 1-25; sequence AIAAVITFLILFTIFGNALVILAVL. Residues 26–36 lie on the Cytoplasmic side of the membrane; the sequence is TSRSLRAPQNL. Residues 37-62 traverse the membrane as a helical segment; it reads FLVSLAAADILVATLIIPFSLANELL. Residues 63 to 72 lie on the Extracellular side of the membrane; sequence GYWYFRHTWC. A disulfide bridge links Cys-72 with Cys-151. Residues 73 to 95 form a helical membrane-spanning segment; that stretch reads XVYLALDVLFCTSSIVHLCAISL. Topologically, residues 96-117 are cytoplasmic; it reads DRYWAVSRALEYNSKRTPRRIK. The chain crosses the membrane as a helical span at residues 118-140; the sequence is CIILTVWLIAAAISLPPLIYKGD. Residues 141–156 are Extracellular-facing; it reads QDPQPRGRPQCKLNQE. The helical transmembrane segment at 157-180 threads the bilayer; it reads AWYILSSSIGSFFVPCLIMILVYL. The Cytoplasmic segment spans residues 181 to 351; the sequence is RIYLIAKRSS…LTREKRFTFV (171 aa). The tract at residues 193–303 is disordered; the sequence is RKPRAKGXPR…VPASPALACS (111 aa). The segment covering 279–290 has biased composition (acidic residues); the sequence is PEEEAEEEEECG. The chain crosses the membrane as a helical span at residues 352–375; the sequence is LAVVIGVFVLCWFPFFFSYSLGAI. Topologically, residues 376–384 are extracellular; that stretch reads CPQHCKVPH. Residues 385-387 form a helical membrane-spanning segment; sequence GLF.

The protein belongs to the G-protein coupled receptor 1 family. Adrenergic receptor subfamily. ADRA2B sub-subfamily. Interacts with RAB26. Interacts with PPP1R9B. Interacts with GGA1, GGA2 and GGA3.

It localises to the cell membrane. In terms of biological role, alpha-2 adrenergic receptors mediate the catecholamine-induced inhibition of adenylate cyclase through the action of G proteins. This is Alpha-2B adrenergic receptor (ADRA2B) from Macroscelides proboscideus (Short-eared elephant shrew).